Consider the following 198-residue polypeptide: Holliday junction resolvase RecU (198 aa).

The interval 1 to 22 is disordered; the sequence is MVNYPHKVSSQKRQTSLSQPKN. A compositionally biased stretch (polar residues) spans 11–22; it reads QKRQTSLSQPKN. Thr-81, Asp-83, Glu-96, and Gln-115 together coordinate Mg(2+).

This sequence belongs to the RecU family. The cofactor is Mg(2+).

It localises to the cytoplasm. The enzyme catalyses Endonucleolytic cleavage at a junction such as a reciprocal single-stranded crossover between two homologous DNA duplexes (Holliday junction).. Its function is as follows. Endonuclease that resolves Holliday junction intermediates in genetic recombination. Cleaves mobile four-strand junctions by introducing symmetrical nicks in paired strands. Promotes annealing of linear ssDNA with homologous dsDNA. Required for DNA repair, homologous recombination and chromosome segregation. The protein is Holliday junction resolvase RecU of Streptococcus pneumoniae (strain P1031).